Consider the following 1083-residue polypeptide: Alpha-mannosidase (1083 aa).

Position 2 is an N-acetylserine (Ser-2). Zn(2+) contacts are provided by His-298, Asp-300, Asp-411, and His-626. The Nucleophile role is filled by Asp-411.

Belongs to the glycosyl hydrolase 38 family. As to quaternary structure, composed of isoforms with three constituent polypeptides described as [(107 kDa)-n (73 kDa)-(6-n) (31 kDa)-(6-n)], where n is 0-6. The 73 kDa and the 31 kDa polypeptides may be proteolytic derivatives of the 107 kDa polypeptide in the vacuole. Oligomerizes in the cytoplasm and retains its oligomeric form during import into the vacuole. Zn(2+) serves as cofactor. In terms of processing, the N-terminus is blocked.

It is found in the vacuole. The enzyme catalyses Hydrolysis of terminal, non-reducing alpha-D-mannose residues in alpha-D-mannosides.. Degrades free oligosaccharides in the vacuole. In Saccharomyces cerevisiae (strain ATCC 204508 / S288c) (Baker's yeast), this protein is Alpha-mannosidase (AMS1).